A 323-amino-acid polypeptide reads, in one-letter code: Conjugal transfer protein TrbB (323 aa).

151-158 (GGTGSGKT) serves as a coordination point for ATP.

Belongs to the GSP E family.

It is found in the cytoplasm. The sequence is that of Conjugal transfer protein TrbB (trbB) from Rhizobium radiobacter (Agrobacterium tumefaciens).